The sequence spans 516 residues: MVQAKAQQQLYTHAAEPKAVQQRRAKYREDETTQTLPTANIMFDRRVVRGNTYAARILPADATQTQTKGPSPASTKKRTTRTLPPRTPEAVDGRRHIDIQTDVYLEELTDTVPEADTSTQTDAFLDRPPTPLFVPQKTGTDAITQIENGDLFDFDFEVEPILEVLVGKVLEQGLMEVLEEEELAAMRAHQEHFEQIRNAELVATQRMEAAERRKLEEKERRMQQERERVERERVVRQKVAASAFARGYLSGIVNTVFDRLVSSGYIYDPVMREVETAFMPWLKEQAIGYLARGVVARRVVDKLVEDAAAALAANRSTLADKAASTAATVDAWAERQAKMEAELQGKELEAVRRRPTFVLRELKPAVASADAVEAAAAELTAQAEEAANAKWEADKAEAAEKARAEAEAAAEEQKALLEELAATAAAEAEERGEEPPAEPPSLPDGVEPVDVEAEVAKAVEAVPKPPVKEVTDIDILSYMMDKGAITKDAIIQALAVHALGDKAYTNHPAFAEAEGA.

2 stretches are compositionally biased toward polar residues: residues 1-11 (MVQAKAQQQLY) and 62-74 (ATQT…SPAS). Disordered stretches follow at residues 1-32 (MVQA…EDET), 60-90 (ADAT…TPEA), 388-412 (NAKW…AAEE), and 424-447 (AAAE…DGVE). Basic and acidic residues predominate over residues 391 to 412 (WEADKAEAAEKARAEAEAAAEE).

It belongs to the flagellar radial spoke RSP3 family. In terms of assembly, interacts with FAP91. In terms of processing, protein 3 is one of the 5 radial spoke proteins that are phosphorylated. Post-translationally, protein 3a might only differ from protein 3 in being unphosphorylated.

It is found in the cytoplasm. The protein resides in the cytoskeleton. Its subcellular location is the flagellum axoneme. Functionally, protein 3 may attach the radial spoke to the outer doublet microtubule or is required to form a stable spoke structure. Its function is as follows. Flagellar radial spokes contribute to the regulation of dynein arm activity and thus the pattern of flagellar bending. They consist of a thin stalk, which is attached to the a subfiber of the outer doublet microtubule, and a bulbous head, which is attached to the stalk and appears to interact with the projections from the central pair of microtubules. The chain is Flagellar radial spoke protein 3 from Chlamydomonas reinhardtii (Chlamydomonas smithii).